Here is an 893-residue protein sequence, read N- to C-terminus: Pentatricopeptide repeat-containing protein At5g52850, chloroplastic (893 aa).

PPR repeat units lie at residues 57–87 (NLDL…MSHR), 88–122 (TVFA…GTHP), 123–157 (NEFT…GFEG), 158–188 (NSVV…LQNA), 189–223 (DTIS…GVPP), 224–257 (NEFT…GIPL), 258–288 (NVVL…SGEQ), 289–323 (DVFL…GLQP), 324–358 (NNFT…GFED), 359–390 (STDV…MVSP), 391–425 (NVVS…EVEP), 426–460 (NVVT…HVDG), 461–491 (EMVV…MKRR), 492–526 (DNIT…GIRM), 527–561 (DQLS…GFSG), 562–592 (AASV…IATP), 593–627 (DVVS…ETEP), 628–658 (DSVT…MKKI), and 664–694 (QVEH…MHLK). The interval 699–774 (IFKTLLRACR…KLGKSTVEVQ (76 aa)) is type E motif. The segment at 775–806 (GKVHSFVSEDVTRVDKTNGIYAEIESIKEEIK) is type E(+) motif. Residues 807–893 (RFGSPYRGNE…SCKREETSFV (87 aa)) are type DYW motif.

It belongs to the PPR family. PCMP-H subfamily.

It localises to the plastid. It is found in the chloroplast. The protein is Pentatricopeptide repeat-containing protein At5g52850, chloroplastic (PCMP-H31) of Arabidopsis thaliana (Mouse-ear cress).